Here is a 225-residue protein sequence, read N- to C-terminus: Endonuclease V (225 aa).

Mg(2+) is bound by residues Asp-43 and Asp-110.

The protein belongs to the endonuclease V family. Mg(2+) is required as a cofactor.

The protein localises to the cytoplasm. The enzyme catalyses Endonucleolytic cleavage at apurinic or apyrimidinic sites to products with a 5'-phosphate.. Its function is as follows. DNA repair enzyme involved in the repair of deaminated bases. Selectively cleaves double-stranded DNA at the second phosphodiester bond 3' to a deoxyinosine leaving behind the intact lesion on the nicked DNA. This Thermotoga petrophila (strain ATCC BAA-488 / DSM 13995 / JCM 10881 / RKU-1) protein is Endonuclease V.